A 282-amino-acid polypeptide reads, in one-letter code: Pantothenate synthetase (282 aa).

33 to 40 (MGALHAGH) contributes to the ATP binding site. Residue histidine 40 is the Proton donor of the active site. Glutamine 64 contacts (R)-pantoate. Glutamine 64 contributes to the beta-alanine binding site. 150–153 (GEKD) contributes to the ATP binding site. Glutamine 156 is a (R)-pantoate binding site. ATP-binding positions include valine 179 and 187–190 (LSSR).

It belongs to the pantothenate synthetase family. Homodimer.

It is found in the cytoplasm. It carries out the reaction (R)-pantoate + beta-alanine + ATP = (R)-pantothenate + AMP + diphosphate + H(+). It participates in cofactor biosynthesis; (R)-pantothenate biosynthesis; (R)-pantothenate from (R)-pantoate and beta-alanine: step 1/1. Functionally, catalyzes the condensation of pantoate with beta-alanine in an ATP-dependent reaction via a pantoyl-adenylate intermediate. This is Pantothenate synthetase from Rhodospirillum rubrum (strain ATCC 11170 / ATH 1.1.1 / DSM 467 / LMG 4362 / NCIMB 8255 / S1).